The primary structure comprises 367 residues: MTSLGTPIQGVTLYSFTRAFHARQYDLDGLIRKVAAEGFGPGLELIGFSSLRGFPDGIDDAFVGQFRDLVAEVDLIPTSLAVNVDTGIRRDRLMNHDELVEYMSKQIEVAARLGFPIARVQISLTPDAMESLLPVAEKYGVTLALEVHADQHGAHERVLALRDRYEKLDSPLLGFTADWGATVTGFAPSLLEAYRRRGAAEDLLRQVVELWNGFYAEGPPNTQKVHGERFGAFIGLAARSGRPDLGIDFAINGTGLFGPAPLDTWLEIMPWVRHVHGKFFGIDENGEEPSVPVRDLVRQLVENGYSGAISSEYEGWHWNNWQDPFDIIRGEQAVQRSAAANAGSAMITDASEARRILNSHLAQPVRG.

Position 146 (Glu-146) interacts with Mg(2+). His-148 serves as the catalytic Proton acceptor. 3 residues coordinate Mg(2+): Asp-178, His-276, and Glu-312.

Belongs to the C-glycoside deglycosidase alpha subunit family. As to quaternary structure, heterodimer composed of an alpha subunit (CarB1) and a beta subunit (CarC1). Mg(2+) is required as a cofactor.

It carries out the reaction 3''-dehydroisovitexin = 1,5-anhydro-D-erythro-hex-1-en-3-ulose + apigenin. Activity is strongly reduced in the presence of chelating agents. In terms of biological role, carbon-carbon bond-cleaving enzyme which participates in the metabolism of C-glycosides. Acts on the C6-glycosylated compound 3''-dehydroisovitexin (3''-oxo-isovitexin). Shows weak activity with 3''-dehydroisoorientin (3''-oxo-homoorientin) and 3'-dehydromangiferin (3'-oxo-mangiferin). This Arthrobacter globiformis (strain ATCC 8010 / DSM 20124 / JCM 1332 / NBRC 12137 / NCIMB 8907 / NRRL B-2979 / 168) protein is C-glycoside deglycosidase alpha subunit.